A 2014-amino-acid polypeptide reads, in one-letter code: AP-1 accessory protein LAA1 (2014 aa).

As to quaternary structure, interacts with the clathrin-associated adapter complex AP-1. Interacts directly with LAA2.

The protein localises to the golgi apparatus. It localises to the cytoplasmic vesicle. Its subcellular location is the clathrin-coated vesicle. Its function is as follows. Involved in localization of clathrin adapter protein complex-1 (AP-1) and subsequent AP-1-mediated clathrin-coated vesicle cargo loading. In complex with LAA2, cooperates with the small GTPase ARF1 and the phosphatidyl-inositol-4-phosphate (PI4P) synthesis to confer temporal specificity to AP-1 recruitment. The chain is AP-1 accessory protein LAA1 from Saccharomyces cerevisiae (strain ATCC 204508 / S288c) (Baker's yeast).